A 367-amino-acid chain; its full sequence is Glutamate 5-kinase (367 aa).

K9 serves as a coordination point for ATP. The substrate site is built by S49, D136, and N148. ATP is bound by residues 168–169 and 210–216; these read TD and TGGMKSK. The 75-residue stretch at 276–350 folds into the PUA domain; that stretch reads SGQIEIDAGA…GMQSQHIQAR (75 aa).

This sequence belongs to the glutamate 5-kinase family.

Its subcellular location is the cytoplasm. It carries out the reaction L-glutamate + ATP = L-glutamyl 5-phosphate + ADP. It functions in the pathway amino-acid biosynthesis; L-proline biosynthesis; L-glutamate 5-semialdehyde from L-glutamate: step 1/2. Catalyzes the transfer of a phosphate group to glutamate to form L-glutamate 5-phosphate. The sequence is that of Glutamate 5-kinase from Bacillus cereus (strain ATCC 10987 / NRS 248).